A 322-amino-acid polypeptide reads, in one-letter code: Glycerol-3-phosphate dehydrogenase [NAD(P)+] (322 aa).

NADPH contacts are provided by tryptophan 11, arginine 31, arginine 32, and lysine 101. Residues lysine 101 and glycine 130 each contribute to the sn-glycerol 3-phosphate site. NADPH is bound at residue alanine 134. Lysine 184, aspartate 237, serine 247, arginine 248, and asparagine 249 together coordinate sn-glycerol 3-phosphate. Lysine 184 acts as the Proton acceptor in catalysis. Arginine 248 contributes to the NADPH binding site. Valine 270 and glutamate 272 together coordinate NADPH.

It belongs to the NAD-dependent glycerol-3-phosphate dehydrogenase family.

The protein resides in the cytoplasm. The catalysed reaction is sn-glycerol 3-phosphate + NAD(+) = dihydroxyacetone phosphate + NADH + H(+). The enzyme catalyses sn-glycerol 3-phosphate + NADP(+) = dihydroxyacetone phosphate + NADPH + H(+). Its pathway is membrane lipid metabolism; glycerophospholipid metabolism. Functionally, catalyzes the reduction of the glycolytic intermediate dihydroxyacetone phosphate (DHAP) to sn-glycerol 3-phosphate (G3P), the key precursor for phospholipid synthesis. The sequence is that of Glycerol-3-phosphate dehydrogenase [NAD(P)+] from Thermus thermophilus (strain ATCC BAA-163 / DSM 7039 / HB27).